We begin with the raw amino-acid sequence, 365 residues long: Alanine racemase (365 aa).

Lys-35 acts as the Proton acceptor; specific for D-alanine in catalysis. Lys-35 bears the N6-(pyridoxal phosphate)lysine mark. Arg-130 lines the substrate pocket. Residue Tyr-256 is the Proton acceptor; specific for L-alanine of the active site. Position 304 (Met-304) interacts with substrate.

The protein belongs to the alanine racemase family. Pyridoxal 5'-phosphate is required as a cofactor.

It catalyses the reaction L-alanine = D-alanine. It functions in the pathway amino-acid biosynthesis; D-alanine biosynthesis; D-alanine from L-alanine: step 1/1. In terms of biological role, catalyzes the interconversion of L-alanine and D-alanine. May also act on other amino acids. The chain is Alanine racemase (alr) from Acidovorax sp. (strain JS42).